Here is a 588-residue protein sequence, read N- to C-terminus: Zinc finger protein 599 (588 aa).

The KRAB domain maps to 9-80 (VSFEDVVVTF…KRGLSQSTCA (72 aa)). 14 C2H2-type zinc fingers span residues 199 to 221 (YTCTECGKGFSKKWALVRHQQIH), 227 to 249 (YECNECGKACRYMADVIRHMRLH), 255 to 277 (YKCIECGKAFKRRFHLTEHQRIH), 283 to 305 (YECKECGKAFTHRSSFIQHNMTH), 311 to 333 (FLCKECGKAFYYSSSFAQHMRIH), 339 to 361 (YECGECGKAFTHRSTFIQHNVTH), 367 to 389 (FLCKECGKTFCLNSSFTQHMRIH), 395 to 417 (YECGECGKAFTHRSTFIRHKRTH), 423 to 445 (FECKECGKAFCDSSSLIQHMRIH), 451 to 473 (YECSECGKAFTHHSVFIRHNRTH), 479 to 501 (LECKECAKAFYYSSSFTRHMRIH), 507 to 529 (YVCRECGKAFTQPANFVRHNRIH), 535 to 557 (FECKECEKAFCDNFALTQHMRTH), and 563 to 585 (FECNECGKTFSHSSSFTHHRKIH).

It belongs to the krueppel C2H2-type zinc-finger protein family.

It is found in the nucleus. Its function is as follows. May be involved in transcriptional regulation. In Homo sapiens (Human), this protein is Zinc finger protein 599 (ZNF599).